Reading from the N-terminus, the 86-residue chain is UPF0297 protein SERP1181 (86 aa).

The protein belongs to the UPF0297 family.

In Staphylococcus epidermidis (strain ATCC 35984 / DSM 28319 / BCRC 17069 / CCUG 31568 / BM 3577 / RP62A), this protein is UPF0297 protein SERP1181.